The sequence spans 254 residues: Phosphoribosylaminoimidazole-succinocarboxamide synthase (254 aa).

Belongs to the SAICAR synthetase family.

The enzyme catalyses 5-amino-1-(5-phospho-D-ribosyl)imidazole-4-carboxylate + L-aspartate + ATP = (2S)-2-[5-amino-1-(5-phospho-beta-D-ribosyl)imidazole-4-carboxamido]succinate + ADP + phosphate + 2 H(+). It functions in the pathway purine metabolism; IMP biosynthesis via de novo pathway; 5-amino-1-(5-phospho-D-ribosyl)imidazole-4-carboxamide from 5-amino-1-(5-phospho-D-ribosyl)imidazole-4-carboxylate: step 1/2. In Bartonella quintana (strain Toulouse) (Rochalimaea quintana), this protein is Phosphoribosylaminoimidazole-succinocarboxamide synthase.